A 212-amino-acid chain; its full sequence is Prolactin-3C1 (212 aa).

A signal peptide spans 1–29 (MQLSLTQARTWKGLFLLVSCMFLWVYVTA). The cysteines at positions 80 and 188 are disulfide-linked. Asparagine 100 carries N-linked (GlcNAc...) asparagine glycosylation.

Belongs to the somatotropin/prolactin family. As to expression, expressed exclusively in decidua.

The protein resides in the secreted. This Mus musculus (Mouse) protein is Prolactin-3C1 (Prl3c1).